A 363-amino-acid polypeptide reads, in one-letter code: Hydroxycarboxylic acid receptor 2 (363 aa).

Residues 1–33 (MNRHHLQDHFLEIDKKNCCVFRDDFIVKVLPPV) lie on the Extracellular side of the membrane. The helical transmembrane segment at 34–54 (LGLEFIFGLLGNGLALWIFCF) threads the bilayer. The Cytoplasmic segment spans residues 55–63 (HLKSWKSSR). The helical transmembrane segment at 64-84 (IFLFNLAVADFLLIICLPFLM) threads the bilayer. Topologically, residues 85–102 (DNYVRRWDWKFGDIPCRL) are extracellular. Cys-100 and Cys-177 are oxidised to a cystine. The helical transmembrane segment at 103 to 123 (MLFMLAMNRQGSIIFLTVVAV) threads the bilayer. Over 124–142 (DRYFRVVHPHHALNKISNR) the chain is Cytoplasmic. A helical membrane pass occupies residues 143–163 (TAAIISCLLWGITIGLTVHLL). The Extracellular segment spans residues 164 to 192 (KKKMPIQNGGANLCSSFSICHTFQWHEAM). The helical transmembrane segment at 193–213 (FLLEFFLPLGIILFCSARIIW) threads the bilayer. Residues 214 to 229 (SLRQRQMDRHAKIKRA) lie on the Cytoplasmic side of the membrane. The chain crosses the membrane as a helical span at residues 230-250 (ITFIMVVAIVFVICFLPSVVV). Residues 251-273 (RIRIFWLLHTSGTQNCEVYRSVD) are Extracellular-facing. The helical transmembrane segment at 274-294 (LAFFITLSFTYMNSMLDPVVY) threads the bilayer. The Cytoplasmic segment spans residues 295–363 (YFSSPSFPNF…SPSYLGPTSP (69 aa)). Residues 319-363 (GEPDNNRSTSVELTGDPNKTRGAPEALMANSGEPWSPSYLGPTSP) form a disordered region. Ser-328 is modified (phosphoserine).

Belongs to the G-protein coupled receptor 1 family. As to expression, expression largely restricted to adipose tissue and spleen. Expressed on mature neutrophils but not on immature neutrophils or eosinophils.

The protein resides in the cell membrane. Acts as a high affinity receptor for both nicotinic acid (also known as niacin) and (D)-beta-hydroxybutyrate and mediates increased adiponectin secretion and decreased lipolysis through G(i)-protein-mediated inhibition of adenylyl cyclase. This pharmacological effect requires nicotinic acid doses that are much higher than those provided by a normal diet. Mediates nicotinic acid-induced apoptosis in mature neutrophils. Receptor activation by nicotinic acid results in reduced cAMP levels which may affect activity of cAMP-dependent protein kinase A and phosphorylation of target proteins, leading to neutrophil apoptosis. The rank order of potency for the displacement of nicotinic acid binding is 5-methyl pyrazole-3-carboxylic acid = pyridine-3-acetic acid &gt; acifran &gt; 5-methyl nicotinic acid = acipimox &gt;&gt; nicotinuric acid = nicotinamide. The polypeptide is Hydroxycarboxylic acid receptor 2 (HCAR2) (Homo sapiens (Human)).